A 134-amino-acid chain; its full sequence is Large ribosomal subunit protein uL16c (134 aa).

Residues 1–17 show a composition bias toward basic residues; it reads MLSPKRTRFRKQHRGRM. A disordered region spans residues 1–21; sequence MLSPKRTRFRKQHRGRMKGIS.

Belongs to the universal ribosomal protein uL16 family. As to quaternary structure, part of the 50S ribosomal subunit.

Its subcellular location is the plastid. It is found in the chloroplast. The sequence is that of Large ribosomal subunit protein uL16c from Solanum bulbocastanum (Wild potato).